The sequence spans 608 residues: DNA mismatch repair protein MutL (608 aa).

It belongs to the DNA mismatch repair MutL/HexB family.

In terms of biological role, this protein is involved in the repair of mismatches in DNA. It is required for dam-dependent methyl-directed DNA mismatch repair. May act as a 'molecular matchmaker', a protein that promotes the formation of a stable complex between two or more DNA-binding proteins in an ATP-dependent manner without itself being part of a final effector complex. The sequence is that of DNA mismatch repair protein MutL from Anoxybacillus flavithermus (strain DSM 21510 / WK1).